Here is a 360-residue protein sequence, read N- to C-terminus: Phospho-N-acetylmuramoyl-pentapeptide-transferase (360 aa).

Helical transmembrane passes span 25-45 (RGILGVLTALSLALWLGPWMI), 73-93 (TMGGALILSAIAVSTLLWADL), 97-117 (YVWVVLIVTLAFGAIGWVDDY), 134-154 (YFWQSVFGLAAAVFLYKTAPT), 168-188 (VTIPLGVGFVVLTYFVIVGSS), 199-219 (GLAIMPTVMVGGALGIFCYLS), 236-256 (SGELIVFCGALIGAGLGFLWF), 263-283 (VFMGDVGALALGAALGTIAVI), 288-308 (IVLFIMGGIFVVETLSVVIQV), and 338-358 (VIVRFWIITVILVLIGLATLK).

The protein belongs to the glycosyltransferase 4 family. MraY subfamily. Requires Mg(2+) as cofactor.

The protein localises to the cell inner membrane. The catalysed reaction is UDP-N-acetyl-alpha-D-muramoyl-L-alanyl-gamma-D-glutamyl-meso-2,6-diaminopimeloyl-D-alanyl-D-alanine + di-trans,octa-cis-undecaprenyl phosphate = di-trans,octa-cis-undecaprenyl diphospho-N-acetyl-alpha-D-muramoyl-L-alanyl-D-glutamyl-meso-2,6-diaminopimeloyl-D-alanyl-D-alanine + UMP. It functions in the pathway cell wall biogenesis; peptidoglycan biosynthesis. Its function is as follows. Catalyzes the initial step of the lipid cycle reactions in the biosynthesis of the cell wall peptidoglycan: transfers peptidoglycan precursor phospho-MurNAc-pentapeptide from UDP-MurNAc-pentapeptide onto the lipid carrier undecaprenyl phosphate, yielding undecaprenyl-pyrophosphoryl-MurNAc-pentapeptide, known as lipid I. This is Phospho-N-acetylmuramoyl-pentapeptide-transferase from Pseudomonas putida (strain ATCC 700007 / DSM 6899 / JCM 31910 / BCRC 17059 / LMG 24140 / F1).